Reading from the N-terminus, the 101-residue chain is Cell cycle protein GpsB (101 aa).

Residues 34-71 (LDMVIKDYETFNQEIEKLQQENLHLSKQLEEAVEQGKR) adopt a coiled-coil conformation.

It belongs to the GpsB family. As to quaternary structure, forms polymers through the coiled coil domains. Interacts with PBP1, MreC and EzrA.

The protein localises to the cytoplasm. Its function is as follows. Divisome component that associates with the complex late in its assembly, after the Z-ring is formed, and is dependent on DivIC and PBP2B for its recruitment to the divisome. Together with EzrA, is a key component of the system that regulates PBP1 localization during cell cycle progression. Its main role could be the removal of PBP1 from the cell pole after pole maturation is completed. Also contributes to the recruitment of PBP1 to the division complex. Not essential for septum formation. The polypeptide is Cell cycle protein GpsB (Bacillus pumilus (strain SAFR-032)).